Here is a 154-residue protein sequence, read N- to C-terminus: Urease accessory protein UreE (154 aa).

The segment at 134-154 (PESGAYGKSGHNHGHSHSHED) is disordered. Basic residues predominate over residues 143-154 (GHNHGHSHSHED).

The protein belongs to the UreE family.

It localises to the cytoplasm. Functionally, involved in urease metallocenter assembly. Binds nickel. Probably functions as a nickel donor during metallocenter assembly. This chain is Urease accessory protein UreE, found in Alteromonas mediterranea (strain DSM 17117 / CIP 110805 / LMG 28347 / Deep ecotype).